Here is a 324-residue protein sequence, read N- to C-terminus: Arginase (324 aa).

Residues His-115, Asp-143, His-145, and Asp-147 each contribute to the Mn(2+) site. Residues 145 to 149, 156 to 158, and Asp-202 contribute to the substrate site; these read HADIN and SGN. Residues Asp-249 and Asp-251 each coordinate Mn(2+). The substrate site is built by Thr-263 and Glu-294.

This sequence belongs to the arginase family. As to quaternary structure, homotrimer. Requires Mn(2+) as cofactor.

The catalysed reaction is L-arginine + H2O = urea + L-ornithine. It functions in the pathway nitrogen metabolism; urea cycle; L-ornithine and urea from L-arginine: step 1/1. The chain is Arginase (agaA) from Emericella nidulans (strain FGSC A4 / ATCC 38163 / CBS 112.46 / NRRL 194 / M139) (Aspergillus nidulans).